A 185-amino-acid polypeptide reads, in one-letter code: Ribosome-recycling factor (185 aa).

It belongs to the RRF family.

Its subcellular location is the cytoplasm. Its function is as follows. Responsible for the release of ribosomes from messenger RNA at the termination of protein biosynthesis. May increase the efficiency of translation by recycling ribosomes from one round of translation to another. The protein is Ribosome-recycling factor of Thermotoga sp. (strain RQ2).